The primary structure comprises 276 residues: 2,3,4,5-tetrahydropyridine-2,6-dicarboxylate N-succinyltransferase (276 aa).

The substrate site is built by arginine 107 and aspartate 144.

The protein belongs to the transferase hexapeptide repeat family. Homotrimer.

The protein localises to the cytoplasm. The enzyme catalyses (S)-2,3,4,5-tetrahydrodipicolinate + succinyl-CoA + H2O = (S)-2-succinylamino-6-oxoheptanedioate + CoA. Its pathway is amino-acid biosynthesis; L-lysine biosynthesis via DAP pathway; LL-2,6-diaminopimelate from (S)-tetrahydrodipicolinate (succinylase route): step 1/3. This Gluconobacter oxydans (strain 621H) (Gluconobacter suboxydans) protein is 2,3,4,5-tetrahydropyridine-2,6-dicarboxylate N-succinyltransferase.